A 432-amino-acid polypeptide reads, in one-letter code: Gamma-glutamyl phosphate reductase (432 aa).

It belongs to the gamma-glutamyl phosphate reductase family.

Its subcellular location is the cytoplasm. The catalysed reaction is L-glutamate 5-semialdehyde + phosphate + NADP(+) = L-glutamyl 5-phosphate + NADPH + H(+). The protein operates within amino-acid biosynthesis; L-proline biosynthesis; L-glutamate 5-semialdehyde from L-glutamate: step 2/2. Functionally, catalyzes the NADPH-dependent reduction of L-glutamate 5-phosphate into L-glutamate 5-semialdehyde and phosphate. The product spontaneously undergoes cyclization to form 1-pyrroline-5-carboxylate. In Methylorubrum extorquens (strain CM4 / NCIMB 13688) (Methylobacterium extorquens), this protein is Gamma-glutamyl phosphate reductase.